Consider the following 445-residue polypeptide: Selenocysteine lyase (445 aa).

Methionine 1 carries the N-acetylmethionine modification. A disordered region spans residues 1–28; it reads MEAAVAPGRDAPAPAASQPSGCGKHNSP. Serine 129 is modified (phosphoserine). Lysine 259 carries the N6-(pyridoxal phosphate)lysine modification. Cysteine 388 (S-selanylcysteine intermediate) is an active-site residue.

The protein belongs to the class-V pyridoxal-phosphate-dependent aminotransferase family. Homodimer. The cofactor is pyridoxal 5'-phosphate.

It is found in the cytoplasm. The protein resides in the cytosol. It catalyses the reaction L-selenocysteine + AH2 = hydrogenselenide + L-alanine + A + H(+). In terms of biological role, catalyzes the decomposition of L-selenocysteine to L-alanine and elemental selenium. The protein is Selenocysteine lyase (SCLY) of Homo sapiens (Human).